Reading from the N-terminus, the 534-residue chain is Membrane-bound lytic murein transglycosylase F (534 aa).

The N-terminal stretch at 1-24 (MQISQFNRLKRSALLFASVLLLSA) is a signal peptide. The non-LT domain stretch occupies residues 25-285 (CQIESEPKSE…TLEEKYIGHI (261 aa)). The tract at residues 287–534 (AFDYVDTRAF…AEQTPVPKAE (248 aa)) is LT domain. Glu330 is an active-site residue. Positions 507-534 (VSGAVEVTPPPEENAPQEAEQTPVPKAE) are disordered. Over residues 520 to 534 (NAPQEAEQTPVPKAE) the composition is skewed to low complexity.

The protein in the N-terminal section; belongs to the bacterial solute-binding protein 3 family. In the C-terminal section; belongs to the transglycosylase Slt family.

The protein localises to the cell outer membrane. The catalysed reaction is Exolytic cleavage of the (1-&gt;4)-beta-glycosidic linkage between N-acetylmuramic acid (MurNAc) and N-acetylglucosamine (GlcNAc) residues in peptidoglycan, from either the reducing or the non-reducing ends of the peptidoglycan chains, with concomitant formation of a 1,6-anhydrobond in the MurNAc residue.. In terms of biological role, murein-degrading enzyme that degrades murein glycan strands and insoluble, high-molecular weight murein sacculi, with the concomitant formation of a 1,6-anhydromuramoyl product. Lytic transglycosylases (LTs) play an integral role in the metabolism of the peptidoglycan (PG) sacculus. Their lytic action creates space within the PG sacculus to allow for its expansion as well as for the insertion of various structures such as secretion systems and flagella. The sequence is that of Membrane-bound lytic murein transglycosylase F from Vibrio campbellii (strain ATCC BAA-1116).